We begin with the raw amino-acid sequence, 305 residues long: Glycine--tRNA ligase alpha subunit (305 aa).

This sequence belongs to the class-II aminoacyl-tRNA synthetase family. In terms of assembly, tetramer of two alpha and two beta subunits.

It localises to the cytoplasm. The catalysed reaction is tRNA(Gly) + glycine + ATP = glycyl-tRNA(Gly) + AMP + diphosphate. The chain is Glycine--tRNA ligase alpha subunit from Streptococcus pneumoniae (strain CGSP14).